We begin with the raw amino-acid sequence, 1025 residues long: Multidrug resistance protein MdtC (1025 aa).

A run of 12 helical transmembrane segments spans residues 3-23 (FFAL…AITL), 333-353 (EVEQ…FLFL), 360-380 (IIPA…MYLC), 387-407 (LSLM…IVVL), 431-451 (VGFT…PLLL), 463-483 (FAVT…TLTP), 528-548 (LVGV…ISIP), 853-873 (VILI…LYES), 875-895 (VHPL…LLAL), 897-917 (LFNA…IGIV), 953-973 (PIMM…LSGG), and 984-1004 (ITIV…TPVV).

It belongs to the resistance-nodulation-cell division (RND) (TC 2.A.6) family. MdtC subfamily. As to quaternary structure, part of a tripartite efflux system composed of MdtA, MdtB and MdtC. MdtC forms a heteromultimer with MdtB.

The protein resides in the cell inner membrane. In terms of biological role, the MdtABC tripartite complex confers resistance against novobiocin and deoxycholate. In Escherichia fergusonii (strain ATCC 35469 / DSM 13698 / CCUG 18766 / IAM 14443 / JCM 21226 / LMG 7866 / NBRC 102419 / NCTC 12128 / CDC 0568-73), this protein is Multidrug resistance protein MdtC.